Reading from the N-terminus, the 245-residue chain is 1-(5-phosphoribosyl)-5-[(5-phosphoribosylamino)methylideneamino] imidazole-4-carboxamide isomerase (245 aa).

Catalysis depends on aspartate 7, which acts as the Proton acceptor. Aspartate 129 serves as the catalytic Proton donor.

This sequence belongs to the HisA/HisF family.

It localises to the cytoplasm. It catalyses the reaction 1-(5-phospho-beta-D-ribosyl)-5-[(5-phospho-beta-D-ribosylamino)methylideneamino]imidazole-4-carboxamide = 5-[(5-phospho-1-deoxy-D-ribulos-1-ylimino)methylamino]-1-(5-phospho-beta-D-ribosyl)imidazole-4-carboxamide. Its pathway is amino-acid biosynthesis; L-histidine biosynthesis; L-histidine from 5-phospho-alpha-D-ribose 1-diphosphate: step 4/9. This Salmonella arizonae (strain ATCC BAA-731 / CDC346-86 / RSK2980) protein is 1-(5-phosphoribosyl)-5-[(5-phosphoribosylamino)methylideneamino] imidazole-4-carboxamide isomerase.